The primary structure comprises 656 residues: Translation factor GUF1, mitochondrial (656 aa).

The N-terminal 28 residues, 1–28 (MWKGLLQSTRAAWRGPCVRAPRLPFFRR), are a transit peptide targeting the mitochondrion. A tr-type G domain is found at 55 to 235 (ERYRNFSIVA…NVIENIPGPD (181 aa)). GTP contacts are provided by residues 64 to 71 (AHVDHGKS), 128 to 132 (DTPGH), and 182 to 185 (NKID).

Belongs to the TRAFAC class translation factor GTPase superfamily. Classic translation factor GTPase family. LepA subfamily.

The protein resides in the mitochondrion inner membrane. It carries out the reaction GTP + H2O = GDP + phosphate + H(+). In terms of biological role, promotes mitochondrial protein synthesis. May act as a fidelity factor of the translation reaction, by catalyzing a one-codon backward translocation of tRNAs on improperly translocated ribosomes. Binds to mitochondrial ribosomes in a GTP-dependent manner. This Yarrowia lipolytica (strain CLIB 122 / E 150) (Yeast) protein is Translation factor GUF1, mitochondrial.